Here is a 456-residue protein sequence, read N- to C-terminus: MISRIKSFKNALNYDKMNCIEIILRRNDLMSTSFENKATNRGVITFTISQDKIKPALDKAFNKIKKDLNAPGFRKGHMPRPVFNQKFGEEVLYEDALNIVLPEAYEAAVTELGLDVVAQPKIDVVSMEKGKEWTLSAEVVTKPEVKLGDYKNLVVEVDASKEVSDEDVDAKIERERQNLAELIIKDGEAAQGDTVVIDFVGSVDGVEFDGGKGDNFSLGLGSGQFIPGFEDQLVGAKAGDEVEVNVTFPESYQAEDLAGKAAKFMTTIHEVKTKEVPELDDELAKDIDEDVDTLEDLKVKYRKELEAAQETAYDDAVEGAAIELAVANAEIVDLPEEMIHEEVNRSVNEFMGNMQRQGISPEMYFQLTGTTQEDLHNQYSAEADKRVKTNLVIEAIAKAEGFEATDSEIEQEINDLATEYNMPADQVRSLLSADMLKHDIAMKKAVEVITSTASVK.

Residues 192–277 (GDTVVIDFVG…IHEVKTKEVP (86 aa)) enclose the PPIase FKBP-type domain.

Belongs to the FKBP-type PPIase family. Tig subfamily.

It is found in the cytoplasm. The catalysed reaction is [protein]-peptidylproline (omega=180) = [protein]-peptidylproline (omega=0). Its function is as follows. Involved in protein export. Acts as a chaperone by maintaining the newly synthesized protein in an open conformation. Functions as a peptidyl-prolyl cis-trans isomerase. This Streptococcus pyogenes serotype M12 (strain MGAS9429) protein is Trigger factor.